The sequence spans 60 residues: Potassium channel toxin alpha-KTx 29.1 (60 aa).

A signal peptide spans 1-28; it reads MKSVCGVLIILVVLTTMLSISTFSTVGA. Cystine bridges form between cysteine 32-cysteine 51, cysteine 40-cysteine 56, and cysteine 44-cysteine 58.

The protein belongs to the short scorpion toxin superfamily. Potassium channel inhibitor family. Alpha-KTx 29 subfamily. As to expression, expressed by the venom gland.

It localises to the secreted. Functionally, weakly inhibits the Kv1.3/KCNA3 channel (1 uM of the toxin inhibits currents by 13.2%) and Kv7.1/KCNQ1 channel (10 uM of the toxin inhibits currents by 27.7%). The protein is Potassium channel toxin alpha-KTx 29.1 of Lychas mucronatus (Chinese swimming scorpion).